We begin with the raw amino-acid sequence, 93 residues long: Protein VNG_0358C (93 aa).

This is Protein VNG_0358C from Halobacterium salinarum (strain ATCC 700922 / JCM 11081 / NRC-1) (Halobacterium halobium).